A 216-amino-acid polypeptide reads, in one-letter code: MRLDLYVITDGAIGGGRSHAEIARFACAGGADAIQLRDKACGPDALCRIGREIRAITRDTGTLFIVNDRLDVALACGADGVHLGQGDLRVDTARRLAPRPFMIGVSVGNAEEAISAVVAGADYVAASPIFATSSKDDAGPGCGISGLREIRAAVAVPVVAIGGITRDNVAEVIAGGADSIAVISAVVGQPDIVAAARDLRERITTAKEQYREKRDA.

4-amino-2-methyl-5-(diphosphooxymethyl)pyrimidine-binding positions include 35–39 and Asn67; that span reads QLRDK. The Mg(2+) site is built by Asp68 and Asp87. Ser106 serves as a coordination point for 4-amino-2-methyl-5-(diphosphooxymethyl)pyrimidine. Position 132–134 (132–134) interacts with 2-[(2R,5Z)-2-carboxy-4-methylthiazol-5(2H)-ylidene]ethyl phosphate; sequence TSS. Residue Lys135 coordinates 4-amino-2-methyl-5-(diphosphooxymethyl)pyrimidine. 2-[(2R,5Z)-2-carboxy-4-methylthiazol-5(2H)-ylidene]ethyl phosphate-binding positions include Gly163 and 183–184; that span reads IS.

Belongs to the thiamine-phosphate synthase family. Mg(2+) serves as cofactor.

The enzyme catalyses 2-[(2R,5Z)-2-carboxy-4-methylthiazol-5(2H)-ylidene]ethyl phosphate + 4-amino-2-methyl-5-(diphosphooxymethyl)pyrimidine + 2 H(+) = thiamine phosphate + CO2 + diphosphate. The catalysed reaction is 2-(2-carboxy-4-methylthiazol-5-yl)ethyl phosphate + 4-amino-2-methyl-5-(diphosphooxymethyl)pyrimidine + 2 H(+) = thiamine phosphate + CO2 + diphosphate. It catalyses the reaction 4-methyl-5-(2-phosphooxyethyl)-thiazole + 4-amino-2-methyl-5-(diphosphooxymethyl)pyrimidine + H(+) = thiamine phosphate + diphosphate. The protein operates within cofactor biosynthesis; thiamine diphosphate biosynthesis; thiamine phosphate from 4-amino-2-methyl-5-diphosphomethylpyrimidine and 4-methyl-5-(2-phosphoethyl)-thiazole: step 1/1. Condenses 4-methyl-5-(beta-hydroxyethyl)thiazole monophosphate (THZ-P) and 2-methyl-4-amino-5-hydroxymethyl pyrimidine pyrophosphate (HMP-PP) to form thiamine monophosphate (TMP). The sequence is that of Thiamine-phosphate synthase from Methanoregula boonei (strain DSM 21154 / JCM 14090 / 6A8).